A 636-amino-acid polypeptide reads, in one-letter code: MKKLQGAHLRKPVTPDLLMTPSDQGDVDLDVDFAAHRGNWTGKLDFLLSCIGYCVGLGNVWRFPYRAYTNGGGAFLVPYFLMLAICGIPLFFLELSLGQFSSLGPLAVWKISPLFKGAGAAMLLIVGLVAIYYNMIIAYVLFYLFASLTSDLPWEHCGNWWNTELCLEHRVSKDGNGALPLNLTCTVSPSEEYWSRYVLHIQGSQGIGSPGEIRWNLCLCLLLAWVIVFLCILKGVKSSGKVVYFTATFPYLILLMLLVRGVTLPGAWKGIQFYLTPQFHHLLSSKVWIEAALQIFYSLGVGFGGLLTFASYNTFHQNIYRDTFIVTLGNAITSILAGFAIFSVLGYMSQELGVPVDQVAKAGPGLAFVVYPQAMTMLPLSPFWSFLFFFMLLTLGLDSQFAFLETIVTAVTDEFPYYLRPKKAVFSGLICVAMYLMGLILTTDGGMYWLVLLDDYSASFGLMVVVITTCLAVTRVYGIQRFCRDIHMMLGFKPGLYFRACWLFLSPATLLALMVYSIVKYQPSEYGSYRFPPWAELLGILMGLLSCLMIPAGMLVAVLREEGSLWERLQQASRPAMDWGPSLEENRTGMYVATLAGSQSPKPLMVHMRKYGGITSFENTAIEVDREIAEEEESMM.

Residues 1–45 (MKKLQGAHLRKPVTPDLLMTPSDQGDVDLDVDFAAHRGNWTGKLD) are Cytoplasmic-facing. Residue T20 is modified to Phosphothreonine. S22 bears the Phosphoserine mark. 3 helical membrane passes run 46–66 (FLLS…FPYR), 74–93 (AFLV…LFFL), and 117–137 (GAGA…NMII). At 138–214 (AYVLFYLFAS…QGIGSPGEIR (77 aa)) the chain is on the extracellular side. An N-linked (GlcNAc...) asparagine glycan is attached at N182. A run of 9 helical transmembrane segments spans residues 215–233 (WNLC…LCIL), 242–259 (VVYF…MLLV), 295–312 (IFYS…FASY), 324–345 (FIVT…FSVL), 378–397 (LPLS…TLGL), 425–443 (VFSG…ILTT), 459–479 (SFGL…VYGI), 500–519 (ACWL…YSIV), and 538–556 (LGIL…GMLV). Topologically, residues 557–636 (AVLREEGSLW…EIAEEEESMM (80 aa)) are cytoplasmic. 2 positions are modified to phosphoserine: S573 and S582. T588 is modified (phosphothreonine). Y591 is modified (phosphotyrosine). Residues S598 and S600 each carry the phosphoserine modification.

It belongs to the sodium:neurotransmitter symporter (SNF) (TC 2.A.22) family. SLC6A7 subfamily. Brain specific (at protein level). Highly expressed in hippocampus, corpus striatum and temporal cortex. Also expressed in frontal cortex, occipital cortex and, at lower levels, in cerebellum and parietal cortex (at protein level).

The protein resides in the synaptic cell membrane. The enzyme catalyses L-proline(out) + chloride(out) + 2 Na(+)(out) = L-proline(in) + chloride(in) + 2 Na(+)(in). It carries out the reaction L-pipecolate(out) + chloride(out) + 2 Na(+)(out) = L-pipecolate(in) + chloride(in) + 2 Na(+)(in). Functionally, brain specific sodium (and chloride)-dependent proline transporter. Terminates the action of proline by its high affinity sodium-dependent reuptake into presynaptic terminals. In Homo sapiens (Human), this protein is Sodium-dependent proline transporter.